A 149-amino-acid chain; its full sequence is Large ribosomal subunit protein uL13 (149 aa).

The protein belongs to the universal ribosomal protein uL13 family. In terms of assembly, part of the 50S ribosomal subunit.

Functionally, this protein is one of the early assembly proteins of the 50S ribosomal subunit, although it is not seen to bind rRNA by itself. It is important during the early stages of 50S assembly. The polypeptide is Large ribosomal subunit protein uL13 (Borrelia recurrentis (strain A1)).